Here is a 219-residue protein sequence, read N- to C-terminus: Steroid receptor RNA activator 1 (219 aa).

2 disordered regions span residues Met1–Val90 and Ser192–Ser219. Polar residues predominate over residues Tyr23–Thr32. Phosphoserine is present on Ser48. The span at Ser55–Gly76 shows a compositional bias: pro residues. A compositionally biased stretch (basic and acidic residues) spans Ser192–Ser203. A compositionally biased stretch (polar residues) spans Ala206–Ser219.

This sequence belongs to the SRA1 family. As to quaternary structure, SRA1 RNA exists in a ribonucleoprotein complex containing NCOA1. The RNA also forms a complex with PUS1 and RARG in the nucleus. Interacts with AR. As to expression, expressed in various prostate cancer cell lines.

Its subcellular location is the nucleus. The protein resides in the cytoplasm. In terms of biological role, functional RNA which acts as a transcriptional coactivator that selectively enhances steroid receptor-mediated transactivation ligand-independently through a mechanism involving the modulating N-terminal domain (AF-1) of steroid receptors. Also mediates transcriptional coactivation of steroid receptors ligand-dependently through the steroid-binding domain (AF-2). Enhances cellular proliferation and differentiation and promotes apoptosis in vivo. May play a role in tumorigenesis. The chain is Steroid receptor RNA activator 1 from Rattus norvegicus (Rat).